The following is a 343-amino-acid chain: Tetraacyldisaccharide 4'-kinase (343 aa).

Residue 61–68 participates in ATP binding; the sequence is GVGGNGKT.

The protein belongs to the LpxK family.

It catalyses the reaction a lipid A disaccharide + ATP = a lipid IVA + ADP + H(+). It functions in the pathway glycolipid biosynthesis; lipid IV(A) biosynthesis; lipid IV(A) from (3R)-3-hydroxytetradecanoyl-[acyl-carrier-protein] and UDP-N-acetyl-alpha-D-glucosamine: step 6/6. Transfers the gamma-phosphate of ATP to the 4'-position of a tetraacyldisaccharide 1-phosphate intermediate (termed DS-1-P) to form tetraacyldisaccharide 1,4'-bis-phosphate (lipid IVA). The polypeptide is Tetraacyldisaccharide 4'-kinase (Colwellia psychrerythraea (strain 34H / ATCC BAA-681) (Vibrio psychroerythus)).